Reading from the N-terminus, the 939-residue chain is UvrABC system protein A (939 aa).

32–39 is an ATP binding site; the sequence is GLSGSGKS. The segment at 252-279 adopts a C4-type zinc-finger fold; the sequence is CADCGISIDELAPRMFSFNSPFGKCERC. ABC transporter domains are found at residues 309–588 and 608–936; these read WGDS…ENSL and GNGN…KYLK. 640–647 serves as a coordination point for ATP; the sequence is GVSGSGKS. A C4-type zinc finger spans residues 739–765; sequence CEACSGDGIIKIEMQFLSDVYVPCEVC.

It belongs to the ABC transporter superfamily. UvrA family. In terms of assembly, forms a heterotetramer with UvrB during the search for lesions.

The protein resides in the cytoplasm. Functionally, the UvrABC repair system catalyzes the recognition and processing of DNA lesions. UvrA is an ATPase and a DNA-binding protein. A damage recognition complex composed of 2 UvrA and 2 UvrB subunits scans DNA for abnormalities. When the presence of a lesion has been verified by UvrB, the UvrA molecules dissociate. The sequence is that of UvrABC system protein A from Clostridium perfringens (strain 13 / Type A).